The sequence spans 1450 residues: Inactive serine/threonine-protein kinase TEX14 (1450 aa).

3 ANK repeats span residues 27-54, 55-84, and 88-117; these read LHEY…AVNT, QGQS…DPNH, and DGST…DLRL. Phosphoserine is present on residues S175 and S186. The Protein kinase domain occupies 199-512; the sequence is IISAQNIYSF…ILKNDLKEFI (314 aa). ATP contacts are provided by residues 205–213 and K267; that span reads IYSFGFGKF. Phosphoserine; by PLK1 is present on S431. Phosphoserine occurs at positions 561 and 662. Residues 700–720 form a disordered region; sequence SDSLGSLNLPEPTREAKGKTS. The GPPX3Y motif lies at 791-797; sequence GPPSLAY. 4 disordered regions span residues 852-906, 947-977, 992-1012, and 1035-1062; these read VSEE…MASV, PPWN…RGPE, DEPK…DKNK, and QPEQ…SSPI. 2 stretches are compositionally biased toward polar residues: residues 875-886 and 894-906; these read KQSTGEQLPSTQ and KNTN…MASV. The D-box motif lies at 889–897; it reads RESLEKNTN. Residues 992–1011 are compositionally biased toward basic and acidic residues; sequence DEPKGNTKFGKMDNSDCDKN. Positions 1038–1061 are enriched in polar residues; sequence QNEASQASCDTSVGTEKFYSTSSP. 2 positions are modified to phosphoserine: S1060 and S1221. 2 disordered regions span residues 1261-1282 and 1300-1418; these read THAT…QQHL and KQQQ…SLGT. 2 stretches are compositionally biased toward polar residues: residues 1300 to 1311 and 1332 to 1344; these read KQQQVSSLASHE and TNSS…LSSR. Phosphoserine is present on residues S1357 and S1358. Composition is skewed to basic and acidic residues over residues 1383–1397 and 1404–1413; these read STRE…VVEQ and SIKPERRESD. S1412 and S1449 each carry phosphoserine.

Belongs to the protein kinase superfamily. In terms of assembly, interacts with KIF23 and RBM44. Interacts with CEP55; inhibiting interaction between CEP55 and PDCD6IP/ALIX and TSG101. Phosphorylated on Thr residues by CDK1 during early phases of mitosis, promoting the interaction with PLK1 and recruitment to kinetochores. Phosphorylated on Ser-431 by PLK1 during late prometaphase promotes the rapid depletion from kinetochores and its subsequent degradation by the APC/C complex. As to expression, detected in testis and spermatogonia. Not detectable in the other tissues tested.

It is found in the cytoplasm. The protein localises to the midbody. The protein resides in the chromosome. It localises to the centromere. Its subcellular location is the kinetochore. Required both for the formation of intercellular bridges during meiosis and for kinetochore-microtubule attachment during mitosis. Intercellular bridges are evolutionarily conserved structures that connect differentiating germ cells and are required for spermatogenesis and male fertility. Acts by promoting the conversion of midbodies into intercellular bridges via its interaction with CEP55: interaction with CEP55 inhibits the interaction between CEP55 and PDCD6IP/ALIX and TSG101, blocking cell abscission and leading to transform midbodies into intercellular bridges. Also plays a role during mitosis: recruited to kinetochores by PLK1 during early mitosis and regulates the maturation of the outer kinetochores and microtubule attachment. Has no protein kinase activity in vitro. This is Inactive serine/threonine-protein kinase TEX14 (Tex14) from Mus musculus (Mouse).